A 379-amino-acid chain; its full sequence is RIB43A-like with coiled-coils protein 1 (379 aa).

2 coiled-coil regions span residues 43–111 (EALN…RCEL) and 285–337 (IRKV…EFRR).

Belongs to the RIB43A family. In terms of assembly, microtubule inner protein component of sperm flagellar doublet microtubules.

It is found in the cytoplasm. The protein resides in the cytoskeleton. Its subcellular location is the flagellum axoneme. In Bos taurus (Bovine), this protein is RIB43A-like with coiled-coils protein 1 (RIBC1).